The primary structure comprises 487 residues: Bifunctional protein HldE (487 aa).

Residues 1–329 form a ribokinase region; the sequence is MLHAVETAFY…GALLTDATYE (329 aa). Position 204–207 (204–207) interacts with ATP; that stretch reads NRGE. D274 is a catalytic residue. The tract at residues 356-487 is cytidylyltransferase; that stretch reads FTNGCFDLLH…GIVQRISAQK (132 aa).

It in the N-terminal section; belongs to the carbohydrate kinase PfkB family. In the C-terminal section; belongs to the cytidylyltransferase family. As to quaternary structure, homodimer.

It carries out the reaction D-glycero-beta-D-manno-heptose 7-phosphate + ATP = D-glycero-beta-D-manno-heptose 1,7-bisphosphate + ADP + H(+). The catalysed reaction is D-glycero-beta-D-manno-heptose 1-phosphate + ATP + H(+) = ADP-D-glycero-beta-D-manno-heptose + diphosphate. It functions in the pathway nucleotide-sugar biosynthesis; ADP-L-glycero-beta-D-manno-heptose biosynthesis; ADP-L-glycero-beta-D-manno-heptose from D-glycero-beta-D-manno-heptose 7-phosphate: step 1/4. The protein operates within nucleotide-sugar biosynthesis; ADP-L-glycero-beta-D-manno-heptose biosynthesis; ADP-L-glycero-beta-D-manno-heptose from D-glycero-beta-D-manno-heptose 7-phosphate: step 3/4. Its function is as follows. Catalyzes the phosphorylation of D-glycero-D-manno-heptose 7-phosphate at the C-1 position to selectively form D-glycero-beta-D-manno-heptose-1,7-bisphosphate. Catalyzes the ADP transfer from ATP to D-glycero-beta-D-manno-heptose 1-phosphate, yielding ADP-D-glycero-beta-D-manno-heptose. This chain is Bifunctional protein HldE, found in Magnetococcus marinus (strain ATCC BAA-1437 / JCM 17883 / MC-1).